We begin with the raw amino-acid sequence, 597 residues long: Dictomallein-3 (597 aa).

Positions M1–C19 are cleaved as a signal peptide. Positions P148–Y409 constitute a Peptidase M66 domain. Residue H301 participates in Zn(2+) binding. E302 is a catalytic residue. Positions 305 and 311 each coordinate Zn(2+).

It belongs to the dictomallein family. The cofactor is Zn(2+).

Its subcellular location is the secreted. The sequence is that of Dictomallein-3 (dtmlC) from Dictyostelium discoideum (Social amoeba).